A 250-amino-acid chain; its full sequence is Ribonuclease 3 (250 aa).

A compositionally biased stretch (basic residues) spans 1-15 (MTKTPAKKKRARSSK). The segment at 1 to 21 (MTKTPAKKKRARSSKAKGTDA) is disordered. One can recognise an RNase III domain in the interval 22–150 (NAALEARIGH…VIGAIFLDGG (129 aa)). Glutamate 63 provides a ligand contact to Mg(2+). Residue aspartate 67 is part of the active site. The Mg(2+) site is built by aspartate 136 and glutamate 139. Residue glutamate 139 is part of the active site. A DRBM domain is found at 175-244 (DPKTVLQEWA…ASVMIEREGV (70 aa)).

Belongs to the ribonuclease III family. In terms of assembly, homodimer. It depends on Mg(2+) as a cofactor.

It localises to the cytoplasm. It catalyses the reaction Endonucleolytic cleavage to 5'-phosphomonoester.. Its function is as follows. Digests double-stranded RNA. Involved in the processing of primary rRNA transcript to yield the immediate precursors to the large and small rRNAs (23S and 16S). Processes some mRNAs, and tRNAs when they are encoded in the rRNA operon. Processes pre-crRNA and tracrRNA of type II CRISPR loci if present in the organism. The polypeptide is Ribonuclease 3 (Bradyrhizobium diazoefficiens (strain JCM 10833 / BCRC 13528 / IAM 13628 / NBRC 14792 / USDA 110)).